We begin with the raw amino-acid sequence, 377 residues long: DAR GTPase 2, mitochondrial (377 aa).

The N-terminal 21 residues, 1-21 (MATAKTWKIAREIGDAVIKAS), are a transit peptide targeting the mitochondrion. Positions 34–211 (AAAVRAISER…VLDTPGIFPP (178 aa)) constitute a CP-type G domain. A DARXP motif motif is present at residues 55 to 59 (DARIP). Residues 82 to 85 (NKME), 110 to 111 (NS), 150 to 155 (NVGKSA), and Gly-207 each bind GTP.

Belongs to the TRAFAC class YlqF/YawG GTPase family. MTG1 subfamily.

Its subcellular location is the mitochondrion. In terms of biological role, GTPase that may function in mitochondrial ribosome assembly. The sequence is that of DAR GTPase 2, mitochondrial from Arabidopsis thaliana (Mouse-ear cress).